The sequence spans 104 residues: Large ribosomal subunit protein bL21 (104 aa).

It belongs to the bacterial ribosomal protein bL21 family. In terms of assembly, part of the 50S ribosomal subunit. Contacts protein L20.

Its function is as follows. This protein binds to 23S rRNA in the presence of protein L20. The sequence is that of Large ribosomal subunit protein bL21 from Streptococcus equi subsp. equi (strain 4047).